The primary structure comprises 101 residues: MAKVALIQRELKREKLVAKYAKKYVQLKAIAGDAKRSDAEREAARLGLQKLPRNANPTRQRNRCAITGRPRGTFRQFGLARAKIREMAFAGDIPGITKASW.

Positions Gly32 to Asn62 are disordered. Residues Asp33 to Ala44 are compositionally biased toward basic and acidic residues.

Belongs to the universal ribosomal protein uS14 family. Part of the 30S ribosomal subunit. Contacts proteins S3 and S10.

In terms of biological role, binds 16S rRNA, required for the assembly of 30S particles and may also be responsible for determining the conformation of the 16S rRNA at the A site. In Verminephrobacter eiseniae (strain EF01-2), this protein is Small ribosomal subunit protein uS14.